The following is a 338-amino-acid chain: Nuclear hormone receptor family member nhr-108 (338 aa).

The segment at residues 7 to 82 (NQPCMVCGEI…IGMLEKVVAS (76 aa)) is a DNA-binding region (nuclear receptor). Residues 10–30 (CMVCGEISYSIRFGAVSCRAC) form an NR C4-type zinc finger. The NR C4-type; degenerate zinc-finger motif lies at 46–65 (KRCNGACDLGKYHRKTCQSC). Residues 92-338 (NNQTILSGLE…QCPLYEATNE (247 aa)) enclose the NR LBD domain.

This sequence belongs to the nuclear hormone receptor family.

The protein resides in the nucleus. In terms of biological role, orphan nuclear receptor. The sequence is that of Nuclear hormone receptor family member nhr-108 (nhr-108) from Caenorhabditis elegans.